We begin with the raw amino-acid sequence, 711 residues long: Tyrosine-protein phosphatase 2 (711 aa).

A Rhodanese domain is found at Thr-21–Val-130. Disordered stretches follow at residues Ala-275 to Arg-306 and Ile-329 to Lys-376. 2 stretches are compositionally biased toward polar residues: residues Ser-290–Arg-306 and Asn-340–Arg-363. Residues Glu-433 to Leu-698 enclose the Tyrosine-protein phosphatase domain. Catalysis depends on Cys-630, which acts as the Phosphocysteine intermediate.

Belongs to the protein-tyrosine phosphatase family. Non-receptor class subfamily.

It is found in the cytoplasm. It carries out the reaction O-phospho-L-tyrosyl-[protein] + H2O = L-tyrosyl-[protein] + phosphate. Its function is as follows. Plays a role in inhibiting the onset of mitosis. Dephosphorylates sty1/spc1 and wis1/spc2/sty2. This is Tyrosine-protein phosphatase 2 (pyp2) from Schizosaccharomyces pombe (strain 972 / ATCC 24843) (Fission yeast).